Here is a 310-residue protein sequence, read N- to C-terminus: HPr kinase/phosphorylase 1 (310 aa).

Catalysis depends on residues H139 and K160. 154–161 lines the ATP pocket; the sequence is GQSGVGKS. S161 lines the Mg(2+) pocket. D178 serves as the catalytic Proton acceptor; for phosphorylation activity. Proton donor; for dephosphorylation activity. An important for the catalytic mechanism of both phosphorylation and dephosphorylation region spans residues 202–211; that stretch reads LEIRGLGIIN. Position 203 (E203) interacts with Mg(2+). R244 is an active-site residue. The segment at 265–270 is important for the catalytic mechanism of dephosphorylation; that stretch reads PVRPGR.

The protein belongs to the HPrK/P family. As to quaternary structure, homohexamer. Mg(2+) is required as a cofactor.

It carries out the reaction [HPr protein]-L-serine + ATP = [HPr protein]-O-phospho-L-serine + ADP + H(+). It catalyses the reaction [HPr protein]-O-phospho-L-serine + phosphate + H(+) = [HPr protein]-L-serine + diphosphate. Its function is as follows. Catalyzes the ATP- as well as the pyrophosphate-dependent phosphorylation of a specific serine residue in HPr, a phosphocarrier protein of the phosphoenolpyruvate-dependent sugar phosphotransferase system (PTS). HprK/P also catalyzes the pyrophosphate-producing, inorganic phosphate-dependent dephosphorylation (phosphorolysis) of seryl-phosphorylated HPr (P-Ser-HPr). The two antagonistic activities of HprK/P are regulated by several intracellular metabolites, which change their concentration in response to the absence or presence of rapidly metabolisable carbon sources (glucose, fructose, etc.) in the growth medium. Also phosphorylates/dephosphorylates the HPr-like catabolite repression protein crh on a specific serine residue. Therefore, by controlling the phosphorylation state of HPr and crh, HPrK/P is a sensor enzyme that plays a major role in the regulation of carbon metabolism and sugar transport: it mediates carbon catabolite repression (CCR), and regulates PTS-catalyzed carbohydrate uptake and inducer exclusion. The chain is HPr kinase/phosphorylase 1 (hprK1) from Oceanobacillus iheyensis (strain DSM 14371 / CIP 107618 / JCM 11309 / KCTC 3954 / HTE831).